We begin with the raw amino-acid sequence, 323 residues long: Beta-ketoacyl-[acyl-carrier-protein] synthase III (323 aa).

Residues Cys-112 and His-249 contribute to the active site. The tract at residues 250–254 is ACP-binding; that stretch reads QANYR. The active site involves Asn-279.

It belongs to the thiolase-like superfamily. FabH family. As to quaternary structure, homodimer.

The protein resides in the cytoplasm. The catalysed reaction is malonyl-[ACP] + acetyl-CoA + H(+) = 3-oxobutanoyl-[ACP] + CO2 + CoA. It participates in lipid metabolism; fatty acid biosynthesis. In terms of biological role, catalyzes the condensation reaction of fatty acid synthesis by the addition to an acyl acceptor of two carbons from malonyl-ACP. Catalyzes the first condensation reaction which initiates fatty acid synthesis and may therefore play a role in governing the total rate of fatty acid production. Possesses both acetoacetyl-ACP synthase and acetyl transacylase activities. Its substrate specificity determines the biosynthesis of branched-chain and/or straight-chain of fatty acids. The sequence is that of Beta-ketoacyl-[acyl-carrier-protein] synthase III from Clostridium kluyveri (strain NBRC 12016).